Reading from the N-terminus, the 118-residue chain is MPRVKGGTVTRARRKKTIKLAKGYFGSKRTLYKVAKQQVMKSGQYAFRDRRQRKRDFRKLWITRINAAARQHDMSYSRLMNGLKKAEIDINRKMLSEIAISDEKAFGELVAKAKDALK.

This sequence belongs to the bacterial ribosomal protein bL20 family.

Its function is as follows. Binds directly to 23S ribosomal RNA and is necessary for the in vitro assembly process of the 50S ribosomal subunit. It is not involved in the protein synthesizing functions of that subunit. This is Large ribosomal subunit protein bL20 from Staphylococcus saprophyticus subsp. saprophyticus (strain ATCC 15305 / DSM 20229 / NCIMB 8711 / NCTC 7292 / S-41).